Here is a 132-residue protein sequence, read N- to C-terminus: UPF0299 membrane protein YohJ (132 aa).

4 helical membrane-spanning segments follow: residues 5–25 (LNII…LYAG), 26–46 (IFIA…MLIL), 63–83 (GCYV…VGVM), and 93–113 (FGPV…VVSW).

This sequence belongs to the UPF0299 family.

It localises to the cell inner membrane. In Shigella flexneri serotype 5b (strain 8401), this protein is UPF0299 membrane protein YohJ.